We begin with the raw amino-acid sequence, 259 residues long: MKHSKKLLLCISFLLITVFISGCGSMTKEDNKEEKIKKGFEKTLGMYPIKNLEDLYDKEGYRDEEFDEGDKGTWILYSEMVIQRKGDDLVTRGMILKVNRNTRTSKGNYIINKISTDSKGVSRNTQKKFPVKMENNKIIPIKKIEDSKIKREIDEFKFFAQYANFNSLKDYKNGDIATNPKVPSYSAEYDLENSDYNVKQLRKRYDIPTQQAPKLLLKGTGDLKGSSIGSKDIEFTFIEKPKKNIYFSDSLDYKPSEGH.

A signal peptide spans 1-22; sequence MKHSKKLLLCISFLLITVFISG. Residue Cys-23 is the site of N-palmitoyl cysteine attachment. Cys-23 carries the S-diacylglycerol cysteine lipid modification.

Belongs to the staphylococcal tandem lipoprotein family.

The protein localises to the cell membrane. This is an uncharacterized protein from Staphylococcus epidermidis (strain ATCC 35984 / DSM 28319 / BCRC 17069 / CCUG 31568 / BM 3577 / RP62A).